A 536-amino-acid chain; its full sequence is Alpha-1,3-mannosyl-glycoprotein 4-beta-N-acetylglucosaminyltransferase A (536 aa).

The Cytoplasmic portion of the chain corresponds to 1 to 6 (MRLRNG). The helical; Signal-anchor for type II membrane protein transmembrane segment at 7-27 (TVATALVFITTFLSLSWYTAW) threads the bilayer. Residues 28–54 (QNGKEKLMAYQREFHALKERLRIAEHR) are a coiled coil. The Lumenal segment spans residues 28–536 (QNGKEKLMAY…EIHIKRNPAD (509 aa)). N-linked (GlcNAc...) asparagine glycans are attached at residues asparagine 77 and asparagine 458.

It belongs to the glycosyltransferase 54 family. Requires a divalent metal cation as cofactor. Post-translationally, N-glycosylated.

Its subcellular location is the golgi apparatus membrane. The protein localises to the secreted. The catalysed reaction is N(4)-{beta-D-GlcNAc-(1-&gt;2)-alpha-D-Man-(1-&gt;3)-[beta-D-GlcNAc-(1-&gt;2)-alpha-D-Man-(1-&gt;6)]-beta-D-Man-(1-&gt;4)-beta-D-GlcNAc-(1-&gt;4)-beta-D-GlcNAc}-L-asparaginyl-[protein] + UDP-N-acetyl-alpha-D-glucosamine = N(4)-{beta-D-GlcNAc-(1-&gt;2)-[beta-D-GlcNAc-(1-&gt;4)]-alpha-D-Man-(1-&gt;3)-[beta-D-GlcNAc-(1-&gt;2)-alpha-D-Man-(1-&gt;6)]-beta-D-Man-(1-&gt;4)-beta-D-GlcNAc-(1-&gt;4)-beta-D-GlcNAc}-L-asparaginyl-[protein] + UDP + H(+). It carries out the reaction an N(4)-{beta-D-GlcNAc-(1-&gt;2)-alpha-D-Man-(1-&gt;3)-[alpha-D-Man-(1-&gt;6)]-beta-D-Man-(1-&gt;4)-beta-D-GlcNAc-(1-&gt;4)-beta-D-GlcNAc}-L-asparaginyl-[protein] + UDP-N-acetyl-alpha-D-glucosamine = an N(4)-{beta-D-GlcNAc-(1-&gt;2)-[beta-D-GlcNAc-(1-&gt;4)]-alpha-D-Man-(1-&gt;3)-[alpha-D-Man-(1-&gt;6)]-beta-D-Man-(1-&gt;4)-beta-D-GlcNAc-(1-&gt;4)-beta-D-GlcNAc}-L-asparaginyl-[protein] + UDP + H(+). The enzyme catalyses an N(4)-{beta-D-GlcNAc-(1-&gt;2)-alpha-D-Man-(1-&gt;3)-[beta-D-GlcNAc-(1-&gt;2)-[beta-D-GlcNAc-(1-&gt;6)]-alpha-D-Man-(1-&gt;6)]-beta-D-Man-(1-&gt;4)-beta-D-GlcNAc-(1-&gt;4)-beta-D-GlcNAc}-L-asparaginyl-[protein] + UDP-N-acetyl-alpha-D-glucosamine = an N(4)-{beta-D-GlcNAc-(1-&gt;2)-[beta-D-GlcNAc-(1-&gt;4)]-alpha-D-Man-(1-&gt;3)-[beta-D-GlcNAc-(1-&gt;2)-[beta-D-GlcNAc-(1-&gt;6)]-alpha-D-Man-(1-&gt;6)]-beta-D-Man-(1-&gt;4)-beta-D-GlcNAc-(1-&gt;4)-beta-D-GlcNAc}-L-asparaginyl-[protein] + UDP + H(+). It catalyses the reaction an N(4)-{beta-D-GlcNAc-(1-&gt;2)-alpha-D-Man-(1-&gt;3)-[beta-D-GlcNAc-(1-&gt;2)-alpha-D-Man-(1-&gt;6)]-beta-D-Man-(1-&gt;4)-beta-D-GlcNAc-(1-&gt;4)-[alpha-L-Fuc-(1-&gt;6)]-beta-D-GlcNAc}-L-asparaginyl-[protein] + UDP-N-acetyl-alpha-D-glucosamine = N(4)-{beta-D-GlcNAc-(1-&gt;2)-[beta-D-GlcNAc-(1-&gt;4)]-alpha-D-Man-(1-&gt;3)-[beta-D-GlcNAc-(1-&gt;2)-alpha-D-Man-(1-&gt;6)]-beta-D-Man-(1-&gt;4)-beta-D-GlcNAc-(1-&gt;4)-[alpha-L-Fuc-(1-&gt;6)]-beta-D-GlcNAc}-asparaginyl-[protein] + UDP + H(+). The catalysed reaction is an N(4)-{beta-D-GlcNAc-(1-&gt;2)-alpha-D-Man-(1-&gt;3)-[beta-D-Gal-(1-&gt;4)-beta-D-GlcNAc-(1-&gt;2)-alpha-D-Man-(1-&gt;6)]-beta-D-Man-(1-&gt;4)-beta-D-GlcNAc-(1-&gt;4)-beta-D-GlcNAc}-L-asparaginyl-[protein] + UDP-N-acetyl-alpha-D-glucosamine = an N(4)-{beta-D-GlcNAc-(1-&gt;2)-[beta-D-GlcNAc-(1-&gt;4)]-alpha-D-Man-(1-&gt;3)-[beta-D-Gal-(1-&gt;4)-beta-D-GlcNAc-(1-&gt;2)-alpha-D-Man-(1-&gt;6)]-beta-D-Man-(1-&gt;4)-beta-D-GlcNAc-(1-&gt;4)-beta-D-GlcNAc}-L-asparaginyl-[protein] + UDP + H(+). It carries out the reaction N(4)-{beta-D-GlcNAc-(1-&gt;2)-alpha-D-Man-(1-&gt;3)-[alpha-D-Man-(1-&gt;3)-{alpha-D-Man-(1-&gt;6)}-alpha-D-Man-(1-&gt;6)]-beta-D-Man-(1-&gt;4)-beta-D-GlcNAc-(1-&gt;4)-beta-D-GlcNAc}-asparaginyl-[protein] + UDP-N-acetyl-alpha-D-glucosamine = N(4)-{beta-D-GlcNAc-(1-&gt;2)-[beta-D-GlcNAc-(1-&gt;4)]-alpha-D-Man-(1-&gt;3)-[alpha-D-Man-(1-&gt;3)-{alpha-D-Man-(1-&gt;6)}-alpha-D-Man-(1-&gt;6)]-beta-D-Man-(1-&gt;4)-beta-D-GlcNAc-(1-&gt;4)-beta-D-GlcNAc}-asparaginyl-[protein] + UDP + H(+). The enzyme catalyses N(4)-{beta-D-GlcNAc-(1-&gt;2)-alpha-D-Man-(1-&gt;3)-beta-D-Man-(1-&gt;4)-beta-D-GlcNAc-(1-&gt;4)-beta-D-GlcNAc}-asparaginyl-[protein] + UDP-N-acetyl-alpha-D-glucosamine = N(4)-{beta-D-GlcNAc-(1-&gt;2)-[beta-D-GlcNAc-(1-&gt;4)]-alpha-D-Man-(1-&gt;3)-beta-D-Man-(1-&gt;4)-beta-D-GlcNAc-(1-&gt;4)-beta-D-GlcNAc}-asparaginyl-[protein] + UDP + H(+). Its pathway is protein modification; protein glycosylation. With respect to regulation, inhibited by UDP. Its function is as follows. Glycosyltransferase that catalyze the transfer of GlcNAc from UDP-GlcNAc to the GlcNAcbeta1-2Manalpha1-3 arm of the core structure of N-linked glycans through a beta1-4 linkage and participates in the production of tri- and tetra-antennary N-linked sugar chains. Involved in glucose transport by mediating SLC2A2/GLUT2 glycosylation, thereby controlling cell-surface expression of SLC2A2 in pancreatic beta cells. The protein is Alpha-1,3-mannosyl-glycoprotein 4-beta-N-acetylglucosaminyltransferase A of Xenopus tropicalis (Western clawed frog).